The chain runs to 1241 residues: Intraflagellar transport protein 122 homolog (1241 aa).

WD repeat units lie at residues 10–50, 51–91, 93–129, and 131–169; these read KAEH…QPLK, GHKD…LKYT, NDAI…VSKH, and SSSK…KVKI. Residues 222–246 form a disordered region; the sequence is VYSSQGSEAEEEEPEEEDDSPRDDN. Residues 229 to 242 show a composition bias toward acidic residues; the sequence is EAEEEEPEEEDDSP. WD repeat units follow at residues 278–317, 319–359, and 512–551; these read ALNF…LGTV, EQNS…HGLY, and KQAT…LLFQ.

In terms of assembly, component of the IFT complex A (IFT-A) complex. IFT-A complex is divided into a core subcomplex composed of IFT122:IFT140:WDR19 which is associated with TULP3 and a peripheral subcomplex composed of IFT43:WDR35:TTC21B. Interacts with IFT43:WDR35; the interaction connects the 2 IFT-A subcomplexes. Interacts with IFTAP; the interaction associates IFTAP with IFT-A complex. Expressed in many tissues. Predominant expression in testis and pituitary.

The protein localises to the cell projection. Its subcellular location is the cilium. It localises to the cytoplasm. The protein resides in the cytoskeleton. It is found in the cilium basal body. Its function is as follows. As a component of the IFT complex A (IFT-A), a complex required for retrograde ciliary transport and entry into cilia of G protein-coupled receptors (GPCRs), it is required in ciliogenesis and ciliary protein trafficking. Involved in cilia formation during neuronal patterning. Acts as a negative regulator of Shh signaling. Required to recruit TULP3 to primary cilia. The chain is Intraflagellar transport protein 122 homolog from Homo sapiens (Human).